A 230-amino-acid polypeptide reads, in one-letter code: Small ribosomal subunit protein uS3 (230 aa).

The KH type-2 domain occupies 39 to 107 (VRKFLEKKLE…PAQINIAEIR (69 aa)).

This sequence belongs to the universal ribosomal protein uS3 family. Part of the 30S ribosomal subunit. Forms a tight complex with proteins S10 and S14.

Functionally, binds the lower part of the 30S subunit head. Binds mRNA in the 70S ribosome, positioning it for translation. The protein is Small ribosomal subunit protein uS3 of Shewanella amazonensis (strain ATCC BAA-1098 / SB2B).